The following is a 130-amino-acid chain: uncharacterized protein (130 aa).

A signal peptide spans 1–26; that stretch reads MKFIYKLLFILSIVLFLFNNIITING. Asn-88 carries N-linked (GlcNAc...) asparagine glycosylation.

Its subcellular location is the secreted. This is an uncharacterized protein from Dictyostelium discoideum (Social amoeba).